The sequence spans 167 residues: Intermembrane phospholipid transport system binding protein MlaD (167 aa).

Over 1–6 the chain is Cytoplasmic; sequence MRQTIK. Residues 7 to 27 form a helical; Signal-anchor for type II membrane protein membrane-spanning segment; the sequence is YEFWVGLFLLLGIGALVFLGL. Topologically, residues 28–167 are periplasmic; it reads RVANVQGFAE…GNEKSESTEQ (140 aa). The interval 40–118 is MCE/MlaD; that stretch reads SYTVTATFDN…GEQYIALTMG (79 aa).

This sequence belongs to the MlaD family. The complex is composed of two ATP-binding proteins (MlaF), two transmembrane proteins (MlaE), two cytoplasmic solute-binding proteins (MlaB) and six periplasmic solute-binding proteins (MlaD).

The protein localises to the cell inner membrane. Functionally, part of the ABC transporter complex MlaFEDB, which is involved in a phospholipid transport pathway that maintains lipid asymmetry in the outer membrane by retrograde trafficking of phospholipids from the outer membrane to the inner membrane. MlaD functions in substrate binding with strong affinity for phospholipids and modulates ATP hydrolytic activity of the complex. In Haemophilus influenzae (strain ATCC 51907 / DSM 11121 / KW20 / Rd), this protein is Intermembrane phospholipid transport system binding protein MlaD.